A 242-amino-acid chain; its full sequence is Triosephosphate isomerase (242 aa).

A substrate-binding site is contributed by 9–11; the sequence is NWK. The Electrophile role is filled by His99. Glu169 serves as the catalytic Proton acceptor. Residues Gly175, Ser207, and 228-229 each bind substrate; that span reads GG.

This sequence belongs to the triosephosphate isomerase family. In terms of assembly, homodimer.

It localises to the cytoplasm. The enzyme catalyses D-glyceraldehyde 3-phosphate = dihydroxyacetone phosphate. The protein operates within carbohydrate biosynthesis; gluconeogenesis. It functions in the pathway carbohydrate degradation; glycolysis; D-glyceraldehyde 3-phosphate from glycerone phosphate: step 1/1. Its function is as follows. Involved in the gluconeogenesis. Catalyzes stereospecifically the conversion of dihydroxyacetone phosphate (DHAP) to D-glyceraldehyde-3-phosphate (G3P). This Mycoplasma mobile (strain ATCC 43663 / 163K / NCTC 11711) (Mesomycoplasma mobile) protein is Triosephosphate isomerase.